Reading from the N-terminus, the 241-residue chain is MKFVVDTHTHTIASGHAYSTVQEMAKEASANGIEMFAITDHGPAMKGAPYLYHFGNLRVIPEVLYGVRILKGVEANIIDYSGGLDMPEEYLRRLDFVLASFHDICIEPKTLEEHTEAVINVLKNPYVDAIAHPGNPQFPLDIEKVVRAAKENGKFIELNNHSFVTRKGSEENCKEFARECKKQGVRIVCGSDSHISFEVGRFDRVYKLLEEVDMPCELVMNTSVEKFDEYIKRKKERIRRK.

Zn(2+)-binding residues include H8, H10, H16, H41, E74, H102, H132, D192, and H194.

It belongs to the PHP family. Zn(2+) is required as a cofactor.

This chain is Probable phosphatase Cthe_0111, found in Acetivibrio thermocellus (strain ATCC 27405 / DSM 1237 / JCM 9322 / NBRC 103400 / NCIMB 10682 / NRRL B-4536 / VPI 7372) (Clostridium thermocellum).